Reading from the N-terminus, the 128-residue chain is Aspartate 1-decarboxylase (128 aa).

Ser25 acts as the Schiff-base intermediate with substrate; via pyruvic acid in catalysis. Position 25 is a pyruvic acid (Ser) (Ser25). Thr57 is a substrate binding site. The active-site Proton donor is Tyr58. 73–75 (GAA) is a binding site for substrate.

The protein belongs to the PanD family. In terms of assembly, heterooctamer of four alpha and four beta subunits. Pyruvate is required as a cofactor. In terms of processing, is synthesized initially as an inactive proenzyme, which is activated by self-cleavage at a specific serine bond to produce a beta-subunit with a hydroxyl group at its C-terminus and an alpha-subunit with a pyruvoyl group at its N-terminus.

It localises to the cytoplasm. The enzyme catalyses L-aspartate + H(+) = beta-alanine + CO2. The protein operates within cofactor biosynthesis; (R)-pantothenate biosynthesis; beta-alanine from L-aspartate: step 1/1. Functionally, catalyzes the pyruvoyl-dependent decarboxylation of aspartate to produce beta-alanine. The chain is Aspartate 1-decarboxylase from Chlorobium luteolum (strain DSM 273 / BCRC 81028 / 2530) (Pelodictyon luteolum).